A 190-amino-acid chain; its full sequence is Probable oligoribonuclease (190 aa).

Residues 19–181 (MVWVDLEMTG…QDIEESIEEL (163 aa)) enclose the Exonuclease domain. The active site involves tyrosine 140.

This sequence belongs to the oligoribonuclease family.

3'-to-5' exoribonuclease specific for small oligoribonucleotides. The chain is Probable oligoribonuclease (rexo2-1) from Dictyostelium discoideum (Social amoeba).